The following is a 334-amino-acid chain: Magnesium-chelatase 38 kDa subunit (334 aa).

Residue 36–43 (GDRGTGKS) coordinates ATP.

It belongs to the Mg-chelatase subunits D/I family.

The enzyme catalyses protoporphyrin IX + Mg(2+) + ATP + H2O = Mg-protoporphyrin IX + ADP + phosphate + 3 H(+). Its pathway is porphyrin-containing compound metabolism; bacteriochlorophyll biosynthesis. Its function is as follows. Involved in bacteriochlorophyll biosynthesis; introduces a magnesium ion into protoporphyrin IX to yield Mg-protoporphyrin IX. This chain is Magnesium-chelatase 38 kDa subunit (bchI), found in Cereibacter sphaeroides (strain ATCC 17023 / DSM 158 / JCM 6121 / CCUG 31486 / LMG 2827 / NBRC 12203 / NCIMB 8253 / ATH 2.4.1.) (Rhodobacter sphaeroides).